Here is a 344-residue protein sequence, read N- to C-terminus: DNA-directed RNA polymerase subunit alpha (344 aa).

The segment at 1 to 246 (MPMERFLKDF…EFLFPLVDFE (246 aa)) is alpha N-terminal domain (alpha-NTD). The segment at 259–344 (ESSNLLDMSI…VLSKNVKISE (86 aa)) is alpha C-terminal domain (alpha-CTD).

Belongs to the RNA polymerase alpha chain family. Homodimer. The RNAP catalytic core consists of 2 alpha, 1 beta, 1 beta' and 1 omega subunit. When a sigma factor is associated with the core the holoenzyme is formed, which can initiate transcription.

It carries out the reaction RNA(n) + a ribonucleoside 5'-triphosphate = RNA(n+1) + diphosphate. Its function is as follows. DNA-dependent RNA polymerase catalyzes the transcription of DNA into RNA using the four ribonucleoside triphosphates as substrates. This Borreliella afzelii (strain PKo) (Borrelia afzelii) protein is DNA-directed RNA polymerase subunit alpha.